A 135-amino-acid polypeptide reads, in one-letter code: Large ribosomal subunit protein uL16c (135 aa).

It belongs to the universal ribosomal protein uL16 family. In terms of assembly, part of the 50S ribosomal subunit.

The protein resides in the plastid. It is found in the chloroplast. This Lotus japonicus (Lotus corniculatus var. japonicus) protein is Large ribosomal subunit protein uL16c.